A 230-amino-acid chain; its full sequence is Somatolactin (230 aa).

An N-terminal signal peptide occupies residues 1–25; it reads MHTKVLQQGLWALLLWPHLFTVSVP. 3 cysteine pairs are disulfide-bonded: cysteine 28/cysteine 38, cysteine 88/cysteine 204, and cysteine 221/cysteine 229. Residue asparagine 144 is glycosylated (N-linked (GlcNAc...) asparagine).

It belongs to the somatotropin/prolactin family.

The protein localises to the secreted. In terms of biological role, selectively regulates proliferation and morphogenesis of neural-crest derived pigment cells. The polypeptide is Somatolactin (Oryzias latipes (Japanese rice fish)).